Here is a 1199-residue protein sequence, read N- to C-terminus: DNA-directed RNA polymerase subunit beta' (1199 aa).

Residues Cys60, Cys62, Cys75, and Cys78 each contribute to the Zn(2+) site. Residues Asp449, Asp451, and Asp453 each coordinate Mg(2+). Positions 818, 892, 899, and 902 each coordinate Zn(2+).

This sequence belongs to the RNA polymerase beta' chain family. As to quaternary structure, the RNAP catalytic core consists of 2 alpha, 1 beta, 1 beta' and 1 omega subunit. When a sigma factor is associated with the core the holoenzyme is formed, which can initiate transcription. Mg(2+) serves as cofactor. The cofactor is Zn(2+).

It catalyses the reaction RNA(n) + a ribonucleoside 5'-triphosphate = RNA(n+1) + diphosphate. Its function is as follows. DNA-dependent RNA polymerase catalyzes the transcription of DNA into RNA using the four ribonucleoside triphosphates as substrates. This is DNA-directed RNA polymerase subunit beta' from Bacillus velezensis (strain DSM 23117 / BGSC 10A6 / LMG 26770 / FZB42) (Bacillus amyloliquefaciens subsp. plantarum).